Reading from the N-terminus, the 258-residue chain is Undecaprenyl-diphosphatase (258 aa).

8 helical membrane-spanning segments follow: residues 1–21 (MSIIDAVILGIVEGLTEFLPV), 42–62 (LKCFEVVIQLGSILAVVFTFF), 71–91 (LWIKLIIGFLPTAAIGYLLYS), 96–116 (LFSQNVVVYMLIIWGVIFIVV), 134–154 (GISYKQAFFIGLSQCFAMVPG), 173–193 (QTAAAFSFLLAVPTMFAATFY), 211–231 (LFLLGGFVAFLVALFAIKMFL), and 237–257 (FDYIPFGIYRILIAFAFMFFV).

It belongs to the UppP family.

It localises to the cell inner membrane. The catalysed reaction is di-trans,octa-cis-undecaprenyl diphosphate + H2O = di-trans,octa-cis-undecaprenyl phosphate + phosphate + H(+). In terms of biological role, catalyzes the dephosphorylation of undecaprenyl diphosphate (UPP). Confers resistance to bacitracin. The chain is Undecaprenyl-diphosphatase from Campylobacter hominis (strain ATCC BAA-381 / DSM 21671 / CCUG 45161 / LMG 19568 / NCTC 13146 / CH001A).